Consider the following 167-residue polypeptide: Small ribosomal subunit protein uS5 (167 aa).

An S5 DRBM domain is found at 12–75; that stretch reads LEDQVVSINR…DAAKKSLIEV (64 aa).

This sequence belongs to the universal ribosomal protein uS5 family. In terms of assembly, part of the 30S ribosomal subunit. Contacts proteins S4 and S8.

Its function is as follows. With S4 and S12 plays an important role in translational accuracy. Located at the back of the 30S subunit body where it stabilizes the conformation of the head with respect to the body. In Lacticaseibacillus paracasei (strain ATCC 334 / BCRC 17002 / CCUG 31169 / CIP 107868 / KCTC 3260 / NRRL B-441) (Lactobacillus paracasei), this protein is Small ribosomal subunit protein uS5.